The chain runs to 419 residues: NF-kappa-B essential modulator (419 aa).

Residues 1-197 form a required for interaction with and ubiquitination by MARCHF2 region; sequence MNRHLWKSQL…REALQQQHSV (197 aa). Phosphoserine; by IKKB is present on residues Ser31 and Ser43. The interaction with CHUK/IKBKB stretch occupies residues 44–111; the sequence is EQGAPETLQR…KLVERLGLEK (68 aa). Residues 49–356 are a coiled coil; that stretch reads ETLQRCLEEN…CQESARIEDM (308 aa). A Phosphoserine modification is found at Ser68. Position 85 is a phosphoserine; by ATM (Ser85). Residues Lys111, Lys139, Lys143, Lys226, Lys246, and Lys264 each participate in a glycyl lysine isopeptide (Lys-Gly) (interchain with G-Cter in ubiquitin) cross-link. The tract at residues 150 to 257 is interaction with TANK; that stretch reads LGELQESQSR…SVVGSERKRG (108 aa). Residues 242 to 350 are ubiquitin-binding (UBAN); sequence DNHIKSSVVG…SKLKASCQES (109 aa). The self-association stretch occupies residues 246-365; it reads KSSVVGSERK…MRKRHVEVSQ (120 aa). The segment at 251–419 is required for interaction with TNFAIP3; that stretch reads GSERKRGMQL…LQIHVMECIE (169 aa). A Glycyl lysine isopeptide (Lys-Gly) (interchain with G-Cter in SUMO); alternate cross-link involves residue Lys277. Lys277 is covalently cross-linked (Glycyl lysine isopeptide (Lys-Gly) (interchain with G-Cter in ubiquitin); alternate). Glycyl lysine isopeptide (Lys-Gly) (interchain with G-Cter in ubiquitin) cross-links involve residues Lys283, Lys285, Lys292, and Lys302. Lys309 participates in a covalent cross-link: Glycyl lysine isopeptide (Lys-Gly) (interchain with G-Cter in SUMO); alternate. Lys309 participates in a covalent cross-link: Glycyl lysine isopeptide (Lys-Gly) (interchain with G-Cter in ubiquitin); alternate. Glycyl lysine isopeptide (Lys-Gly) (interchain with G-Cter in ubiquitin) cross-links involve residues Lys321 and Lys325. The interval 322-343 is leucine-zipper; it reads LAEKKELLQEQLEQLQREYSKL. A Glycyl lysine isopeptide (Lys-Gly) (interchain with G-Cter in ubiquitin and interchain with MARCHF2) cross-link involves residue Lys326. The segment at 358-395 is disordered; the sequence is KRHVEVSQAPLPPAPAYLSSPLALPSQRRSPPEEPPDF. The span at 373–386 shows a compositional bias: low complexity; it reads AYLSSPLALPSQRR. A Phosphoserine; by IKKB modification is found at Ser376. The tract at residues 382–419 is interaction with CYLD; the sequence is PSQRRSPPEEPPDFCCPKCQYQAPDMDTLQIHVMECIE. Ser387 is subject to Phosphoserine. Residues 389–419 form a CCHC NOA-type zinc finger; the sequence is PEEPPDFCCPKCQYQAPDMDTLQIHVMECIE. Cys397 is a Zn(2+) binding site. A Glycyl lysine isopeptide (Lys-Gly) (interchain with G-Cter in ubiquitin) cross-link involves residue Lys399. Zn(2+)-binding residues include Cys400, His413, and Cys417.

In terms of assembly, homodimer; disulfide-linked. Component of the I-kappa-B-kinase (IKK) core complex consisting of CHUK, IKBKB and IKBKG; probably four alpha/CHUK-beta/IKBKB dimers are associated with four gamma/IKBKG subunits. The IKK core complex seems to associate with regulatory or adapter proteins to form a IKK-signalosome holo-complex. The IKK complex associates with TERF2IP/RAP1, leading to promote IKK-mediated phosphorylation of RELA/p65. Part of a complex composed of NCOA2, NCOA3, CHUK/IKKA, IKBKB, IKBKG and CREBBP. Interacts with COPS3, CYLD, NALP2, TRPC4AP and PIDD1. Interacts with ATM; the complex is exported from the nucleus. Interacts with TRAF6. Interacts with IKBKE. Interacts with TANK; the interaction is enhanced by IKBKE and TBK1. Part of a ternary complex consisting of TANK, IKBKB and IKBKG. Interacts with ZFAND5. Interacts with RIPK2. Interacts with TNIP1 and TNFAIP3; TNIP1 facilitates the TNFAIP3-mediated de-ubiquitination of IKBKG. Interacts with TNFAIP3; the interaction is induced by TNF stimulation and by polyubiquitin. Binds (via UBAN region) polyubiquitin; binds both 'Lys-63'-linked and linear polyubiquitin, with higher affinity for linear ubiquitin. Interacts with NLRP10. Interacts with TANK; this interaction increases in response to DNA damage. Interacts with USP10; this interaction increases in response to DNA damage. Interacts with ZC3H12A; this interaction increases in response to DNA damage. Interacts with IFIT5; the interaction synergizes the recruitment of IKK to MAP3K7 and enhances IKK phosphorylation. Interacts with TRIM29; this interaction induces IKBKG/NEMO ubiquitination and proteolytic degradation. Interacts with TRIM13; this interaction leads to IKBKG/NEMO ubiquitination. Interacts with ARFIP2. Interacts with RIPK1. Interacts with (ubiquitinated) BCL10; interaction with polyubiquitinated BCL10 via both 'Lys-63'-linked and linear ubiquitin is required for TCR-induced NF-kappa-B activation. Interacts with MARCHF2; during the late stages of macrophage viral and bacterial infection; the interaction leads to ubiquitination and degradation of IKBKG/NEMO. (Microbial infection) Interacts with Molluscum contagiosum virus protein MC005; this interaction inhibits NF-kappa-B activation. As to quaternary structure, (Microbial infection) Interacts with HTLV-1 Tax oncoprotein; the interaction activates IKBKG. In terms of assembly, (Microbial infection) Interacts with Shigella flexneri ipah9.8; the interaction promotes TNIP1-dependent 'Lys-27'-linked polyubiquitination of IKBKG which perturbs NF-kappa-B activation during bacterial infection. (Microbial infection) Interacts with SARS coronavirus-2/SARS-CoV-2 virus protein ORF9B (via N-terminus); the interaction inhibits polyubiquitination through 'Lys-63' and NF-kappa-B activation. Post-translationally, phosphorylation at Ser-68 attenuates aminoterminal homodimerization. Polyubiquitinated on Lys-285 via 'Lys-63'-linked ubiquitin; the ubiquitination is mediated downstream of NOD2 and RIPK2 and probably plays a role in signaling by facilitating interactions with ubiquitin domain-containing proteins and activates the NF-kappa-B pathway. Polyubiquitinated on Lys-285 and Lys-399 through 'Lys-63'-linked ubiquitin; the ubiquitination is mediated by BCL10, MALT1 and TRAF6 and probably plays a role in signaling by facilitating interactions with ubiquitin domain-containing proteins and activates the NF-kappa-B pathway. Monoubiquitinated on Lys-277 and Lys-309; promotes nuclear export. Polyubiquitinated through 'Lys-27' by TRIM23; involved in antiviral innate and inflammatory responses. Linear polyubiquitinated on Lys-111, Lys-143, Lys-226, Lys-246, Lys-264, Lys-277, Lys-285, Lys-292, Lys-302, Lys-309 and Lys-326; the head-to-tail polyubiquitination is mediated by the LUBAC complex and plays a key role in NF-kappa-B activation. Deubiquitinated by USP10 in a TANK-dependent and -independent manner, leading to the negative regulation of NF-kappa-B signaling upon DNA damage. Ubiquitinated at Lys-326 by MARCHF2 following bacterial and viral infection which leads to its degradation. Polyubiquitinated via 'Lys-29'-linked ubiquitin; leading to lysosomal degradation. In terms of processing, sumoylated on Lys-277 and Lys-309 with SUMO1; the modification results in phosphorylation of Ser-85 by ATM leading to a replacement of the sumoylation by mono-ubiquitination on these residues. Post-translationally, neddylated by TRIM40, resulting in stabilization of NFKBIA and down-regulation of NF-kappa-B activity. (Microbial infection) Cleaved by hepatitis A virus (HAV) protease 3C allowing the virus to disrupt the host innate immune signaling. In terms of processing, (Microbial infection) Deubiquitinated by Epstein-Barr virus BPLF1 on both 'Lys-48' and 'Lys-63'-linked ubiquitin chains; leading to NF-kappa-B signaling inhibition. Post-translationally, (Microbial infection) Polyubiquitinated on Lys-309 and Lys-321 via 'Lys-27'-linked ubiquitin by Shigella flexneri E3 ubiquitin-protein ligase ipah9.8, leading to its degradation by the proteasome. (Microbial infection) Polyubiquitination through 'Lys-63' is interrupted by interaction with SARS coronavirus-2/SARS-CoV-2 virus protein ORF9B which inhibits the NF-kappa-B pathway. Heart, brain, placenta, lung, liver, skeletal muscle, kidney and pancreas.

It is found in the cytoplasm. It localises to the nucleus. In terms of biological role, regulatory subunit of the IKK core complex which phosphorylates inhibitors of NF-kappa-B thus leading to the dissociation of the inhibitor/NF-kappa-B complex and ultimately the degradation of the inhibitor. Its binding to scaffolding polyubiquitin plays a key role in IKK activation by multiple signaling receptor pathways. Can recognize and bind both 'Lys-63'-linked and linear polyubiquitin upon cell stimulation, with a much higher affinity for linear polyubiquitin. Could be implicated in NF-kappa-B-mediated protection from cytokine toxicity. Essential for viral activation of IRF3. Involved in TLR3- and IFIH1-mediated antiviral innate response; this function requires 'Lys-27'-linked polyubiquitination. Functionally, (Microbial infection) Also considered to be a mediator for HTLV-1 Tax oncoprotein activation of NF-kappa-B. The polypeptide is NF-kappa-B essential modulator (Homo sapiens (Human)).